Here is a 434-residue protein sequence, read N- to C-terminus: Salicylate hydroxylase (434 aa).

9–38 (RIGIVGGGISGVALALELCRYSHIQVQLFE) is a binding site for FAD.

In terms of assembly, monomer. The cofactor is FAD.

It carries out the reaction salicylate + NADH + O2 + 2 H(+) = catechol + CO2 + NAD(+) + H2O. The protein operates within aromatic compound metabolism; naphthalene degradation. This chain is Salicylate hydroxylase (nahG), found in Pseudomonas putida (Arthrobacter siderocapsulatus).